Consider the following 592-residue polypeptide: Aspartate--tRNA(Asp/Asn) ligase (592 aa).

Position 171 (Glu171) interacts with L-aspartate. Residues 195 to 198 form an aspartate region; it reads QLFK. Residue Arg217 participates in L-aspartate binding. ATP is bound by residues 217 to 219 and Gln226; that span reads RDE. Position 447 (His447) interacts with L-aspartate. Glu481 provides a ligand contact to ATP. Residue Arg488 participates in L-aspartate binding. 533–536 is a binding site for ATP; sequence GLDR.

It belongs to the class-II aminoacyl-tRNA synthetase family. Type 1 subfamily. In terms of assembly, homodimer.

It localises to the cytoplasm. The enzyme catalyses tRNA(Asx) + L-aspartate + ATP = L-aspartyl-tRNA(Asx) + AMP + diphosphate. Aspartyl-tRNA synthetase with relaxed tRNA specificity since it is able to aspartylate not only its cognate tRNA(Asp) but also tRNA(Asn). Reaction proceeds in two steps: L-aspartate is first activated by ATP to form Asp-AMP and then transferred to the acceptor end of tRNA(Asp/Asn). This Psychromonas ingrahamii (strain DSM 17664 / CCUG 51855 / 37) protein is Aspartate--tRNA(Asp/Asn) ligase.